The following is a 622-amino-acid chain: MRINILSEDTSNKIAAGEVVERPFSVVKELVENSIDAGAKTINIEIENGGRTLIKVLDDGYGIDKDDIEKAFMPHATSKISKLQDIYSINTLGFRGEALPSIASVSKTTLKSRTKENEFGREISISGGSVDYIKDCGTNIGTHIEVRDLFYNVPAREKFLKSTAKEASSISDIVNRLALAHSEISFRLINNGKRVITTYATDNLIDTIRAIYGKKICDNVISFERHTDLVSVHGYVGNAEISRGSRNNQSIFINKRYIKNKLITAAVENAVKSFMMINKFPFFIIFLDIFPEFVDVNVHPTKSEVKFQNERDIFKIIFDTVHEGIRNSLKESFKVEALKEEEDKLFDIKEDVITKNEIKHDDKIDGYIKKDSFPVPVQIPIDLKRPIENYDNSTKENKDRSFDDFREKDIIKETSQEKETYDIITNKKAKFPELRVIGQFNNTYILAESFEELYIIDQHAAHEKILFEKYREDIKNKGVSSQILITPSVVELLPEDFIYYDENKEVFKNAGFVIEYFGDNTVAIKEVPLFLGKPLVKDLFLEIIDNLKNMGSGETSEVKYRSIATAACKSAVKAYHELTHDEMKTLIQDLRFAEDPFNCPHGRPTIVRLTVTDFEKKFKRIQ.

It belongs to the DNA mismatch repair MutL/HexB family.

Its function is as follows. This protein is involved in the repair of mismatches in DNA. It is required for dam-dependent methyl-directed DNA mismatch repair. May act as a 'molecular matchmaker', a protein that promotes the formation of a stable complex between two or more DNA-binding proteins in an ATP-dependent manner without itself being part of a final effector complex. This is DNA mismatch repair protein MutL from Clostridium acetobutylicum (strain ATCC 824 / DSM 792 / JCM 1419 / IAM 19013 / LMG 5710 / NBRC 13948 / NRRL B-527 / VKM B-1787 / 2291 / W).